The sequence spans 647 residues: Probable cobalt/nickel-exporting P-type ATPase (647 aa).

5 helical membrane-spanning segments follow: residues 33 to 53, 55 to 75, 94 to 114, 260 to 280, and 291 to 311; these read WAAAALALFLTGLAAQLLGAP, AVVWTLYLACYVVGGWEPAWV, AAIGAATIGQVFDGALLIVIF, AGVVVATLALLTVPLMFGADL, and MIVASPCAVVLATMPPLLSAI. Asp339 (4-aspartylphosphate intermediate) is an active-site residue. Mg(2+) is bound by residues Asp532 and Asp536. A helical transmembrane segment spans residues 587–607; the sequence is VIANLVMAGAAITTLVLWDLF.

This sequence belongs to the cation transport ATPase (P-type) (TC 3.A.3) family. Type IB subfamily.

It localises to the cell membrane. The enzyme catalyses Ni(2+)(out) + ATP + H2O = Ni(2+)(in) + ADP + phosphate + H(+). It catalyses the reaction Co(2+)(out) + ATP + H2O = Co(2+)(in) + ADP + phosphate + H(+). In terms of biological role, involved in heavy metal homeostasis. Probably exports nickel and cobalt ions out of the cell. The chain is Probable cobalt/nickel-exporting P-type ATPase (ctpD) from Mycolicibacterium smegmatis (strain ATCC 700084 / mc(2)155) (Mycobacterium smegmatis).